Here is a 426-residue protein sequence, read N- to C-terminus: UPF0229 protein Csal_0882 (426 aa).

The span at 82–93 shows a compositional bias: basic and acidic residues; that stretch reads FVEGDRLRRPGG. The disordered stretch occupies residues 82-109; that stretch reads FVEGDRLRRPGGEGRGGSGEGSASNQGE.

The protein belongs to the UPF0229 family.

This is UPF0229 protein Csal_0882 from Chromohalobacter salexigens (strain ATCC BAA-138 / DSM 3043 / CIP 106854 / NCIMB 13768 / 1H11).